Consider the following 662-residue polypeptide: Transmembrane 9 superfamily member 2 (662 aa).

An N-terminal signal peptide occupies residues 1–28 (MSSRPPASPPAQGSRLLLLSLLLLGTVP). At 29 to 299 (GPRPGSAFYL…LESMPHTHIQ (271 aa)) the chain is on the lumenal side. A helical membrane pass occupies residues 300 to 320 (WFSIMNSLVIVLFLSGMVAMI). The Cytoplasmic segment spans residues 321-373 (MLRTLHKDIARYNQMDSTEDAQEEFGWKLVHGDIFRPPRKGMLLSVFLGSGTQ). Residues 374–394 (ILIMTFVTLFFACLGFLSPAN) traverse the membrane as a helical segment. Topologically, residues 395 to 397 (RGA) are lumenal. Residues 398–418 (LMTCAVVLWVLLGTPAGYVAA) traverse the membrane as a helical segment. Over 419–436 (RFYKSFGGEKWKTNVLLT) the chain is Cytoplasmic. Residues 437 to 457 (SFLCPGIVFADFFIMNLILWG) form a helical membrane-spanning segment. Residues 458–465 (EGSSAAIP) are Lumenal-facing. Residues 466–486 (FGTLVAILALWFCISVPLTFI) form a helical membrane-spanning segment. Residues 487–521 (GAYFGFKKNAIEHPVRTNQIPRQIPEQSFYTKPLP) lie on the Cytoplasmic side of the membrane. Residues 522-542 (GIIMGGILPFGCIFIQLFFIL) form a helical membrane-spanning segment. Over 543-553 (NSIWSHQMYYM) the chain is Lumenal. Residues 554 to 574 (FGFLFLVFIILVITCSEATIL) traverse the membrane as a helical segment. At 575–590 (LCYFHLCAEDYHWQWR) the chain is on the cytoplasmic side. Residues 591–611 (SFLTSGFTAVYFLIYAIHYFF) traverse the membrane as a helical segment. Topologically, residues 612 to 630 (SKLQITGTASTILYFGYTM) are lumenal. Residues 631–651 (IMVLIFFLFTGTIGFFACFWF) form a helical membrane-spanning segment. Over 652–662 (VTKIYSVVKVD) the chain is Cytoplasmic.

Belongs to the nonaspanin (TM9SF) (TC 9.A.2) family.

Its subcellular location is the endosome membrane. It is found in the golgi outpost. The protein localises to the cytoplasm. It localises to the cytoskeleton. The protein resides in the microtubule organizing center. Its function is as follows. In the intracellular compartments, may function as a channel or small molecule transporter. The protein is Transmembrane 9 superfamily member 2 (Tm9sf2) of Mus musculus (Mouse).